We begin with the raw amino-acid sequence, 469 residues long: Neuraminidase (469 aa).

At 1–6 (MNPNQK) the chain is on the intravirion side. A helical transmembrane segment spans residues 7 to 29 (IITIGSVSLTIATVCFLMQIAIL). An involved in apical transport and lipid raft association region spans residues 11 to 33 (GSVSLTIATVCFLMQIAILATTV). The Virion surface portion of the chain corresponds to 30–469 (ATTVTLHFKQ…DGANINFMPI (440 aa)). Positions 36–88 (HFKQNECNPPANNQVVPCEPIIIERNITEIVYLNNITIEKEVCPEVAEYRNWS) are hypervariable stalk region. Residues asparagine 61, asparagine 70, and asparagine 86 are each glycosylated (N-linked (GlcNAc...) asparagine; by host). A head of neuraminidase region spans residues 91–469 (QCQITGFAPF…DGANINFMPI (379 aa)). 8 cysteine pairs are disulfide-bonded: cysteine 92-cysteine 417, cysteine 124-cysteine 129, cysteine 183-cysteine 230, cysteine 232-cysteine 237, cysteine 278-cysteine 291, cysteine 280-cysteine 289, cysteine 318-cysteine 337, and cysteine 421-cysteine 447. Substrate is bound at residue arginine 118. An N-linked (GlcNAc...) asparagine; by host glycan is attached at asparagine 146. Residue aspartate 151 is the Proton donor/acceptor of the active site. Arginine 152 contributes to the substrate binding site. 2 N-linked (GlcNAc...) asparagine; by host glycosylation sites follow: asparagine 200 and asparagine 234. Residue 276–277 (EE) participates in substrate binding. Arginine 292 is a binding site for substrate. 3 residues coordinate Ca(2+): aspartate 293, glycine 297, and aspartate 324. The tract at residues 324-349 (DTPRSDDSSSNSNCRDPNNERGNPGV) is disordered. A substrate-binding site is contributed by arginine 371. Asparagine 402 is a glycosylation site (N-linked (GlcNAc...) asparagine; by host). The Nucleophile role is filled by tyrosine 406.

The protein belongs to the glycosyl hydrolase 34 family. As to quaternary structure, homotetramer. Ca(2+) is required as a cofactor. N-glycosylated.

The protein localises to the virion membrane. It is found in the host apical cell membrane. The catalysed reaction is Hydrolysis of alpha-(2-&gt;3)-, alpha-(2-&gt;6)-, alpha-(2-&gt;8)- glycosidic linkages of terminal sialic acid residues in oligosaccharides, glycoproteins, glycolipids, colominic acid and synthetic substrates.. Its activity is regulated as follows. Inhibited by the neuraminidase inhibitors zanamivir (Relenza) and oseltamivir (Tamiflu). These drugs interfere with the release of progeny virus from infected cells and are effective against all influenza strains. Resistance to neuraminidase inhibitors is quite rare. Catalyzes the removal of terminal sialic acid residues from viral and cellular glycoconjugates. Cleaves off the terminal sialic acids on the glycosylated HA during virus budding to facilitate virus release. Additionally helps virus spread through the circulation by further removing sialic acids from the cell surface. These cleavages prevent self-aggregation and ensure the efficient spread of the progeny virus from cell to cell. Otherwise, infection would be limited to one round of replication. Described as a receptor-destroying enzyme because it cleaves a terminal sialic acid from the cellular receptors. May facilitate viral invasion of the upper airways by cleaving the sialic acid moieties on the mucin of the airway epithelial cells. Likely to plays a role in the budding process through its association with lipid rafts during intracellular transport. May additionally display a raft-association independent effect on budding. Plays a role in the determination of host range restriction on replication and virulence. Sialidase activity in late endosome/lysosome traffic seems to enhance virus replication. The chain is Neuraminidase from Influenza A virus (strain A/Turkey/Wisconsin/1/1966 H9N2).